A 349-amino-acid chain; its full sequence is Phosphoribosylformylglycinamidine cyclo-ligase (349 aa).

This sequence belongs to the AIR synthase family.

It localises to the cytoplasm. It catalyses the reaction 2-formamido-N(1)-(5-O-phospho-beta-D-ribosyl)acetamidine + ATP = 5-amino-1-(5-phospho-beta-D-ribosyl)imidazole + ADP + phosphate + H(+). The protein operates within purine metabolism; IMP biosynthesis via de novo pathway; 5-amino-1-(5-phospho-D-ribosyl)imidazole from N(2)-formyl-N(1)-(5-phospho-D-ribosyl)glycinamide: step 2/2. This Bordetella parapertussis (strain 12822 / ATCC BAA-587 / NCTC 13253) protein is Phosphoribosylformylglycinamidine cyclo-ligase.